We begin with the raw amino-acid sequence, 502 residues long: Betaine aldehyde dehydrogenase, chloroplastic (502 aa).

The N-terminal 7 residues, 1–7 (MAFPIPA), are a transit peptide targeting the chloroplast. Residue 240–245 (GSSATG) participates in NAD(+) binding. Glu262 acts as the Proton acceptor in catalysis. The active-site Nucleophile is Cys296.

Belongs to the aldehyde dehydrogenase family. In terms of assembly, homodimer.

The protein localises to the plastid. It localises to the chloroplast. It catalyses the reaction betaine aldehyde + NAD(+) + H2O = glycine betaine + NADH + 2 H(+). Its pathway is amine and polyamine biosynthesis; betaine biosynthesis via choline pathway; betaine from betaine aldehyde: step 1/1. This is Betaine aldehyde dehydrogenase, chloroplastic from Atriplex hortensis (Mountain spinach).